Consider the following 260-residue polypeptide: Beta-lactamase SHV-6 (260 aa).

The N-terminal stretch at 1 to 11 is a signal peptide; sequence LLATLPLAVHA. The active-site Acyl-ester intermediate is serine 56. A disulfide bridge links cysteine 63 with cysteine 109. Glutamate 154 (proton acceptor) is an active-site residue. 220 to 222 serves as a coordination point for substrate; sequence KTG.

This sequence belongs to the class-A beta-lactamase family.

It carries out the reaction a beta-lactam + H2O = a substituted beta-amino acid. SHV enzymes hydrolyze broad spectrum cephalosporins notably cefotaxime and ceftazidime. The polypeptide is Beta-lactamase SHV-6 (bla) (Klebsiella pneumoniae).